The chain runs to 328 residues: 4-hydroxy-2-oxoglutarate aldolase, mitochondrial (328 aa).

The transit peptide at 1–26 directs the protein to the mitochondrion; the sequence is MFGRTLFPARVIALGSGLFRTPLRTL. 76 to 77 is a substrate binding site; it reads SN. The Schiff-base intermediate with substrate role is filled by Lys-195. Substrate-binding residues include Ser-197 and Gly-221.

The protein belongs to the DapA family. Homotetramer.

Its subcellular location is the mitochondrion. It carries out the reaction (4S)-4-hydroxy-2-oxoglutarate = glyoxylate + pyruvate. It catalyses the reaction (4R)-4-hydroxy-2-oxoglutarate = glyoxylate + pyruvate. Inhibited by divalent cations. Functionally, catalyzes the final step in the metabolic pathway of hydroxyproline. The sequence is that of 4-hydroxy-2-oxoglutarate aldolase, mitochondrial (hoga1) from Xenopus tropicalis (Western clawed frog).